A 381-amino-acid polypeptide reads, in one-letter code: cAMP-dependent protein kinase type I-beta regulatory subunit (381 aa).

A dimerization and phosphorylation region spans residues Met-1 to Val-136. Residue Ser-3 is modified to Phosphoserine. At Tyr-21 the chain carries 3'-nitrotyrosine. Residues Leu-66–Asn-88 are disordered. Residues Ser-77 and Ser-83 each carry the phosphoserine modification. Thr-85 carries the post-translational modification Phosphothreonine. The Pseudophosphorylation motif signature appears at Arg-96–Val-100. Arg-97 bears the Omega-N-methylarginine mark. 3',5'-cyclic AMP is bound by residues Leu-137 to Ser-254, Glu-202, Arg-211, Ile-255 to Val-381, Glu-326, and Arg-335.

Belongs to the cAMP-dependent kinase regulatory chain family. In terms of assembly, the inactive holoenzyme is composed of two regulatory chains and two catalytic chains. Activation by cAMP releases the two active catalytic monomers and the regulatory dimer. Interacts with PRKX; regulates this cAMP-dependent protein kinase. Interacts with smAKAP; this interaction may target PRKAR1B to the plasma membrane. The pseudophosphorylation site binds to the substrate-binding region of the catalytic chain, resulting in the inhibition of its activity. Abundant in brain and testis. No expression in lung, heart, liver, spleen, kidney and skeletal muscle.

It is found in the cell membrane. Its function is as follows. Regulatory subunit of the cAMP-dependent protein kinases involved in cAMP signaling in cells. The protein is cAMP-dependent protein kinase type I-beta regulatory subunit (Prkar1b) of Rattus norvegicus (Rat).